The primary structure comprises 246 residues: Probable phosphatase AHA_1344 (246 aa).

Zn(2+)-binding residues include His-8, His-10, His-16, His-41, Glu-74, His-102, His-132, Asp-193, and His-195.

It belongs to the PHP family. Zn(2+) serves as cofactor.

The protein is Probable phosphatase AHA_1344 of Aeromonas hydrophila subsp. hydrophila (strain ATCC 7966 / DSM 30187 / BCRC 13018 / CCUG 14551 / JCM 1027 / KCTC 2358 / NCIMB 9240 / NCTC 8049).